The following is a 760-amino-acid chain: Formate acetyltransferase 1 (760 aa).

The 623-residue stretch at 3-625 folds into the PFL domain; the sequence is ELNEKLATAW…KTGNTPDGRR (623 aa). K63 carries the N6-acetyllysine; alternate modification. K63 is modified (N6-succinyllysine; alternate). Position 107 is an N6-succinyllysine (K107). N6-acetyllysine; alternate is present on K117. K117 carries the N6-succinyllysine; alternate modification. The residue at position 124 (K124) is an N6-succinyllysine. K195 is modified (N6-acetyllysine; alternate). An N6-succinyllysine; alternate modification is found at K195. The active-site S-acetylcysteine intermediate is the C419. Residue C420 is the Cysteine radical intermediate of the active site. An N6-acetyllysine; alternate modification is found at K454. K454 bears the N6-succinyllysine; alternate mark. An N6-succinyllysine modification is found at K467. 2 positions are modified to N6-acetyllysine: K541 and K591. Residues 632-760 enclose the Glycine radical domain; the sequence is PGANPMHGRD…VITRTFTQSM (129 aa). Residue K654 is modified to N6-succinyllysine. G735 carries the post-translational modification Glycine radical.

Belongs to the glycyl radical enzyme (GRE) family. PFL subfamily. In terms of assembly, homodimer. Interacts specifically with FocA.

The protein localises to the cytoplasm. It carries out the reaction formate + acetyl-CoA = pyruvate + CoA. Its pathway is fermentation; pyruvate fermentation; formate from pyruvate: step 1/1. Catalyzes the conversion of pyruvate to formate and acetyl-CoA. In addition, may be involved in the control of the activity of the formate channel FocA, via direct interaction with FocA. In Escherichia coli (strain K12), this protein is Formate acetyltransferase 1 (pflB).